Here is a 361-residue protein sequence, read N- to C-terminus: Tryptophan--tRNA ligase, mitochondrial (361 aa).

A mitochondrion-targeting transit peptide spans methionine 1 to valine 16. ATP is bound by residues glutamine 21 and histidine 27 to asparagine 30. Residues proline 22–asparagine 30 carry the 'HIGH' region motif. L-tryptophan is bound at residue aspartate 165. Residues glycine 177–aspartate 179, lysine 225–serine 229, and lysine 228 each bind ATP. Positions lysine 225–serine 229 match the 'KMSKS' region motif.

It belongs to the class-I aminoacyl-tRNA synthetase family. Homodimer.

The protein resides in the mitochondrion matrix. It carries out the reaction tRNA(Trp) + L-tryptophan + ATP = L-tryptophyl-tRNA(Trp) + AMP + diphosphate + H(+). The chain is Tryptophan--tRNA ligase, mitochondrial from Schizosaccharomyces pombe (strain 972 / ATCC 24843) (Fission yeast).